We begin with the raw amino-acid sequence, 66 residues long: Stress-induced protein KIN1 (66 aa).

Residues methionine 1–glutamine 13 are compositionally biased toward polar residues. Residues methionine 1–alanine 52 form a disordered region. A compositionally biased stretch (basic and acidic residues) spans lysine 17 to aspartate 31. 2 repeats span residues aspartate 31–glycine 35 and aspartate 49–glycine 53. Residues alanine 32 to lysine 45 show a composition bias toward low complexity.

The sequence is that of Stress-induced protein KIN1 (KIN1) from Arabidopsis thaliana (Mouse-ear cress).